The sequence spans 593 residues: Methylenetetrahydrofolate reductase (NADH) 1 (593 aa).

Glutamate 21 functions as the Proton donor/acceptor in the catalytic mechanism. NAD(+)-binding positions include 21–26 (EYFPPK) and 52–53 (TW). FAD contacts are provided by residues 52–53 (TW), histidine 81, 111–113 (RGD), tyrosine 153, 157–160 (HPDA), aspartate 175, and lysine 182. A substrate-binding site is contributed by aspartate 113. Substrate is bound by residues glutamine 193 and tyrosine 285.

Belongs to the methylenetetrahydrofolate reductase family. In terms of assembly, homodimer. Requires FAD as cofactor.

The enzyme catalyses (6S)-5-methyl-5,6,7,8-tetrahydrofolate + NAD(+) = (6R)-5,10-methylene-5,6,7,8-tetrahydrofolate + NADH + H(+). It participates in one-carbon metabolism; tetrahydrofolate interconversion. Plant MTHFRs strongly prefer NADH over NADPH. Not inhibited by methionine or S-adenosylmethionine. Functionally, the probable reversibility of the MTHFR reaction in plants suggests that they can metabolize the methyl group of 5,10-methylenetetrahydrofolate to serine, sugars and starch. The sequence is that of Methylenetetrahydrofolate reductase (NADH) 1 from Zea mays (Maize).